We begin with the raw amino-acid sequence, 461 residues long: MSRQVVRSSKFRHVFGQPAKADQCYEDVRVSQTTWDSGFCAVNPKFVALICEASGGGAFLVLPLGKTGRVDKNAPTVCGHTAPVLDIAWCPHNDNVIASGSEDCTVMVWEIPDGGLMLPLREPVVTLEGHTKRVGIVAWHTTAQNVLLSAGCDNVIMVWDVGTGAAMLTLGPEVHPDTIYSVDWSRDGGLICTSCRDKRVRIIEPRKGTVVAEKDRPHEGTRPVRAVFVSEGKILTTGFSRMSERQVALWDTKHLEEPLSLQELDTSSGVLLPFFDPDTNIVYLCGKGDSSIRYFEITSEAPFLHYLSMFSSKESQRGMGYMPKRGLEVNKCEIARFYKLHERRCEPIAMTVPRKSDLFQEDLYPPTAGPDPALTAEEWLGGRDAGPLLISLKDGYVPPKSRELRVNRGLDTGRRRAAPEASGTPSSDAVSRLEEEMRKLQATVQELQKRLDRLEETVQAK.

Ser-2 is subject to N-acetylserine. Phosphoserine; by PKC is present on Ser-2. 7 WD repeats span residues 13-63 (HVFG…LVLP), 73-110 (NAPTVCGHTAPVLDIAWCPHNDNVIASGSEDCTVMVWE), 123-160 (PVVTLEGHTKRVGIVAWHTTAQNVLLSAGCDNVIMVWD), 164-204 (GAAM…RIIE), 207-251 (KGTV…ALWD), 258-296 (PLSLQELDTSSGVLLPFFDPDTNIVYLCGKGDSSIRYFE), and 302-349 (PFLH…EPIA). The segment covering 403-418 (ELRVNRGLDTGRRRAA) has biased composition (basic and acidic residues). The disordered stretch occupies residues 403-432 (ELRVNRGLDTGRRRAAPEASGTPSSDAVSR). Thr-412 carries the post-translational modification Phosphothreonine; by PKC. Ser-422 is modified (phosphoserine). Residues 424-460 (TPSSDAVSRLEEEMRKLQATVQELQKRLDRLEETVQA) are a coiled coil. Lys-449 bears the N6-acetyllysine mark.

Belongs to the WD repeat coronin family. Binds actin. Phosphorylation at Thr-412 by PKC strongly down-regulates the association with actin. Post-translationally, polyubiquitinated by RNF128 with 'Lys-48'-linked chains, leading to proteasomal degradation. In terms of tissue distribution, expressed in brain, thymus, spleen, bone marrow and lymph node. Low in lung and gut.

It localises to the cytoplasm. The protein resides in the cytoskeleton. It is found in the cell cortex. Its subcellular location is the cytoplasmic vesicle. The protein localises to the phagosome membrane. Functionally, may be a crucial component of the cytoskeleton of highly motile cells, functioning both in the invagination of large pieces of plasma membrane, as well as in forming protrusions of the plasma membrane involved in cell locomotion. In mycobacteria-infected cells, its retention on the phagosomal membrane prevents fusion between phagosomes and lysosomes. The polypeptide is Coronin-1A (CORO1A) (Homo sapiens (Human)).